The sequence spans 385 residues: Digeranylgeranylglycerophospholipid reductase 2 (385 aa).

FAD contacts are provided by A13, E32, C43, A44, G46, R95, A119, D273, G285, and I286.

This sequence belongs to the geranylgeranyl reductase family. DGGGPL reductase subfamily. FAD serves as cofactor.

It catalyses the reaction a 2,3-bis-O-phytanyl-sn-glycerol 1-phospholipid + 8 A = a 2,3-bis-O-(geranylgeranyl)-sn-glycerol 1-phospholipid + 8 AH2. The catalysed reaction is 2,3-bis-O-(phytanyl)-sn-glycerol 1-phosphate + 8 A = 2,3-bis-O-(geranylgeranyl)-sn-glycerol 1-phosphate + 8 AH2. The enzyme catalyses CDP-2,3-bis-O-(geranylgeranyl)-sn-glycerol + 8 AH2 = CDP-2,3-bis-O-(phytanyl)-sn-glycerol + 8 A. It carries out the reaction archaetidylserine + 8 AH2 = 2,3-bis-O-phytanyl-sn-glycero-3-phospho-L-serine + 8 A. Its pathway is membrane lipid metabolism; glycerophospholipid metabolism. Is involved in the reduction of 2,3-digeranylgeranylglycerophospholipids (unsaturated archaeols) into 2,3-diphytanylglycerophospholipids (saturated archaeols) in the biosynthesis of archaeal membrane lipids. Catalyzes the formation of archaetidic acid (2,3-di-O-phytanyl-sn-glyceryl phosphate) from 2,3-di-O-geranylgeranylglyceryl phosphate (DGGGP) via the hydrogenation of each double bond of the isoprenoid chains. Is also probably able to reduce double bonds of geranyl groups in CDP-2,3-bis-O-(geranylgeranyl)-sn-glycerol and archaetidylserine, thus acting at various stages in the biosynthesis of archaeal membrane lipids. The protein is Digeranylgeranylglycerophospholipid reductase 2 of Methanothermobacter thermautotrophicus (strain ATCC 29096 / DSM 1053 / JCM 10044 / NBRC 100330 / Delta H) (Methanobacterium thermoautotrophicum).